The primary structure comprises 875 residues: Alanine--tRNA ligase (875 aa).

Residues His-563, His-567, Cys-665, and His-669 each contribute to the Zn(2+) site.

Belongs to the class-II aminoacyl-tRNA synthetase family. The cofactor is Zn(2+).

It localises to the cytoplasm. The catalysed reaction is tRNA(Ala) + L-alanine + ATP = L-alanyl-tRNA(Ala) + AMP + diphosphate. Its function is as follows. Catalyzes the attachment of alanine to tRNA(Ala) in a two-step reaction: alanine is first activated by ATP to form Ala-AMP and then transferred to the acceptor end of tRNA(Ala). Also edits incorrectly charged Ser-tRNA(Ala) and Gly-tRNA(Ala) via its editing domain. The protein is Alanine--tRNA ligase of Shewanella pealeana (strain ATCC 700345 / ANG-SQ1).